A 172-amino-acid chain; its full sequence is uncharacterized protein (172 aa).

The 169-residue stretch at 3-171 (KKVAIILADE…FNREIVKKLE (169 aa)) folds into the PfpI endopeptidase domain.

It belongs to the peptidase C56 family.

This is an uncharacterized protein from Staphylococcus epidermidis (strain ATCC 35984 / DSM 28319 / BCRC 17069 / CCUG 31568 / BM 3577 / RP62A).